The primary structure comprises 544 residues: Membrane protein insertase YidC (544 aa).

5 helical membrane-spanning segments follow: residues 6-26, 343-363, 418-438, 456-476, and 497-517; these read NLLLIALLFVTFMLWQAWETD, KFLHGFIGNWGFSIIAITFIV, LGGCLPLVIQMPIFLALYYML, LSAQDPYYILPILMGVTMFFI, and PVIFTVFFLWFPSGLVMYYIV.

Belongs to the OXA1/ALB3/YidC family. Type 1 subfamily. As to quaternary structure, interacts with the Sec translocase complex via SecD. Specifically interacts with transmembrane segments of nascent integral membrane proteins during membrane integration.

The protein resides in the cell inner membrane. Required for the insertion and/or proper folding and/or complex formation of integral membrane proteins into the membrane. Involved in integration of membrane proteins that insert both dependently and independently of the Sec translocase complex, as well as at least some lipoproteins. Aids folding of multispanning membrane proteins. This chain is Membrane protein insertase YidC, found in Pectobacterium atrosepticum (strain SCRI 1043 / ATCC BAA-672) (Erwinia carotovora subsp. atroseptica).